Here is an 858-residue protein sequence, read N- to C-terminus: Elongation factor 2b (858 aa).

Positions 17-362 (SNIRNMSVIA…MITIHLPSPV (346 aa)) constitute a tr-type G domain. GTP is bound by residues 26–33 (AHVDHGKS), 158–161 (NKMD), and 216–218 (SGL). Diphthamide is present on His715.

The protein belongs to the TRAFAC class translation factor GTPase superfamily. Classic translation factor GTPase family. EF-G/EF-2 subfamily. Binds to 80S ribosomes. Actively translating ribosomes show mutually exclusive binding of eIF5a (EIF5A or EIF5A2) and EEF2/eEF2. Interacts with serbp1; interaction sequesters eef2/eEF2 at the A-site of the ribosome, thereby blocking the interaction sites of the mRNA-tRNA complex, promoting ribosome stabilization and hibernation. Interacts with habp4; interaction takes place at the A-site of hibernating ribosomes and promotes ribosome stabilization.

The protein resides in the cytoplasm. It is found in the nucleus. It carries out the reaction GTP + H2O = GDP + phosphate + H(+). Its function is as follows. Catalyzes the GTP-dependent ribosomal translocation step during translation elongation. During this step, the ribosome changes from the pre-translocational (PRE) to the post-translocational (POST) state as the newly formed A-site-bound peptidyl-tRNA and P-site-bound deacylated tRNA move to the P and E sites, respectively. Catalyzes the coordinated movement of the two tRNA molecules, the mRNA and conformational changes in the ribosome. This is Elongation factor 2b from Danio rerio (Zebrafish).